The following is a 1215-amino-acid chain: von Willebrand factor A domain-containing protein 5B1 (1215 aa).

Residues 1-18 (MPGLLNCLTGAALPLMES) form the signal peptide. A VIT domain is found at 19–141 (DVTSYVSGYA…NVTVFISTSS (123 aa)). Asn132 carries an N-linked (GlcNAc...) asparagine glycan. The 180-residue stretch at 353 to 532 (EFIFLIDRSN…KAMAPVLSDV (180 aa)) folds into the VWFA domain. Residues 595–674 (SVFYPSQDEG…DPTGTARRYP (80 aa)) form a disordered region. 2 stretches are compositionally biased toward polar residues: residues 608–621 (GSGNCAKNVNQGQT) and 646–667 (YSTNQISSHKTCPRATTASDPT). Tyr879 carries the phosphotyrosine modification. Disordered regions lie at residues 934–953 (GSSAGLGRPQSMLREHSSAA), 964–999 (QDSPTSTFNKTPSPGHEKQTTAEGPPQNLSASAPSS), and 1100–1121 (SPQDCTSLSSSPPSCDGISLKS). Polar residues-rich tracts occupy residues 964–975 (QDSPTSTFNKTP), 990–999 (QNLSASAPSS), and 1100–1112 (SPQDCTSLSSSPP).

The protein localises to the secreted. This Mus musculus (Mouse) protein is von Willebrand factor A domain-containing protein 5B1 (Vwa5b1).